Consider the following 986-residue polypeptide: Probable ATP-dependent RNA helicase ddx42 (986 aa).

Disordered stretches follow at residues 1 to 149, 165 to 192, and 206 to 252; these read MSKR…DEDD, AAIDNSKSIEKGQQQQQSLKSKRDDIDN, and QLAN…IEPL. Low complexity predominate over residues 29–82; the sequence is SNINNNNNSNNNNNNNNNNNNNNNNNNNKNNIGTGINLNIKNNNNINNNNNKSG. The segment covering 105–117 has biased composition (polar residues); it reads PPKSSMTTLNKSP. Residues 119 to 137 show a composition bias toward low complexity; it reads NFENASSNNNNNNNNNNQE. Positions 217–236 are enriched in acidic residues; it reads DDDVDYSSLDDDDGYFDDEE. Positions 305 to 333 match the Q motif motif; the sequence is TSFGHYGFDDILLQAIAKQSIETPTPIQK. Residues 336-511 enclose the Helicase ATP-binding domain; the sequence is IPIALSGRDL…RTILSDPIKI (176 aa). Residue 349 to 356 participates in ATP binding; the sequence is AKTGSGKT. The short motif at 459–462 is the DEAD box element; the sequence is DEAD. In terms of domain architecture, Helicase C-terminal spans 522-684; that stretch reads DITQIVQVLK…FVPPELIDVA (163 aa). The disordered stretch occupies residues 688-986; sequence PHFKRERGGG…FNQRSQYNRR (299 aa). Over residues 696–723 the composition is skewed to gly residues; the sequence is GGGGGSNRGRGRGGGGVGYRRNSRGGGV. Low complexity-rich tracts occupy residues 753-764 and 771-978; these read NPNNTDNSEINN and NNEN…NNFN.

The protein belongs to the DEAD box helicase family. DDX42 subfamily.

It is found in the nucleus. It catalyses the reaction ATP + H2O = ADP + phosphate + H(+). Functionally, probable ATP-dependent RNA helicase which may bind to partially double-stranded RNAs (dsRNAs) in order to unwind RNA secondary structures. The sequence is that of Probable ATP-dependent RNA helicase ddx42 (ddx42) from Dictyostelium discoideum (Social amoeba).